A 116-amino-acid polypeptide reads, in one-letter code: Large ribosomal subunit protein bL20c (116 aa).

This sequence belongs to the bacterial ribosomal protein bL20 family.

It is found in the plastid. The protein resides in the chloroplast. Its function is as follows. Binds directly to 23S ribosomal RNA and is necessary for the in vitro assembly process of the 50S ribosomal subunit. It is not involved in the protein synthesizing functions of that subunit. In Cyanidioschyzon merolae (strain NIES-3377 / 10D) (Unicellular red alga), this protein is Large ribosomal subunit protein bL20c.